Reading from the N-terminus, the 431-residue chain is MSSIRFLCQRCHQALKLSGSSESRSLPAAPAPTSGQAEPGDTREPGVTTREVTDAEEQQDGASSRSPPGDGSVSKGHANIFTLLGELGAMHMLSSIQKAAGDIFDIVSGQAVVDHPLCEECTDSLLEQLDIQLALTEADSQNYQRCLETGELATSEDEAAALRAELRDLELEEARLVQELEDVDRNNARAAADLQAAQAEAAELDQQERQHYRDYSALKRQQLELLDQLGNVENQLQYARVQRDRLKEINCFTATFEIWVEGPLGVINNFRLGRLPTVRVGWNEINTAWGQAALLLLTLANTIGLQFQRYRLIPCGNHSYLKSLTDDRTELPLFCYGGQDVFLNNKYDRAMVAFLDCMQQFKEEAEKGELGLSLPYGIQVETGLMEDVGGRGECYSIRTHLNTQELWTKALKFMLINFKWSLIWVASRYQK.

The disordered stretch occupies residues 17–74 (LSGSSESRSLPAAPAPTSGQAEPGDTREPGVTTREVTDAEEQQDGASSRSPPGDGSVS). A coiled-coil region spans residues 125 to 248 (LLEQLDIQLA…ARVQRDRLKE (124 aa)). Residues 173-243 (EARLVQELED…NQLQYARVQR (71 aa)) are required for homodimer formation.

Belongs to the beclin family. In terms of assembly, homodimer (via coiled-coil domain). Interacts (via coiled-coil domain) with ATG14 (via coiled-coil domain); this interaction is tighter than BECN2 self-association. Interacts with AMBRA1, UVRAG and PIK3C3/VPS34; these interactions are not disrupted by starvation. Does not interact with RUBCN. Interacts (via N-terminus) with GPRASP1/GASP1; the interaction is direct. Present in fetal and adult brain (at protein level).

It is found in the cytoplasm. Its function is as follows. Involved in 2 distinct lysosomal degradation pathways: acts as a regulator of autophagy and as a regulator of G-protein coupled receptors turnover. Regulates degradation in lysosomes of a variety of G-protein coupled receptors via its interaction with GPRASP1/GASP1. The chain is Beclin-2 from Homo sapiens (Human).